Here is a 241-residue protein sequence, read N- to C-terminus: 1-(5-phosphoribosyl)-5-[(5-phosphoribosylamino)methylideneamino] imidazole-4-carboxamide isomerase (241 aa).

Catalysis depends on Asp8, which acts as the Proton acceptor. The active-site Proton donor is Asp130.

The protein belongs to the HisA/HisF family.

The protein resides in the cytoplasm. It carries out the reaction 1-(5-phospho-beta-D-ribosyl)-5-[(5-phospho-beta-D-ribosylamino)methylideneamino]imidazole-4-carboxamide = 5-[(5-phospho-1-deoxy-D-ribulos-1-ylimino)methylamino]-1-(5-phospho-beta-D-ribosyl)imidazole-4-carboxamide. It functions in the pathway amino-acid biosynthesis; L-histidine biosynthesis; L-histidine from 5-phospho-alpha-D-ribose 1-diphosphate: step 4/9. The chain is 1-(5-phosphoribosyl)-5-[(5-phosphoribosylamino)methylideneamino] imidazole-4-carboxamide isomerase from Leptospira borgpetersenii serovar Hardjo-bovis (strain L550).